A 251-amino-acid polypeptide reads, in one-letter code: HTH-type transcriptional regulator UlaR (251 aa).

Positions 3–58 (EAQRHQILLEMLAQLGFVTVEKVVERLGISPATARRDINKLDESGKLKKVRNGAEA) constitute an HTH deoR-type domain. The segment at residues 20–39 (VTVEKVVERLGISPATARRD) is a DNA-binding region (H-T-H motif).

Its subcellular location is the cytoplasm. In terms of biological role, represses ulaG and the ulaABCDEF operon. The polypeptide is HTH-type transcriptional regulator UlaR (Shigella dysenteriae serotype 1 (strain Sd197)).